The sequence spans 594 residues: Arginine--tRNA ligase (594 aa).

Residues 139–149 carry the 'HIGH' region motif; it reads ANPTGPLHVGH.

This sequence belongs to the class-I aminoacyl-tRNA synthetase family. As to quaternary structure, monomer.

It is found in the cytoplasm. It catalyses the reaction tRNA(Arg) + L-arginine + ATP = L-arginyl-tRNA(Arg) + AMP + diphosphate. The sequence is that of Arginine--tRNA ligase from Burkholderia pseudomallei (strain 1106a).